A 316-amino-acid chain; its full sequence is M-phase inducer phosphatase cdc-25.3 (316 aa).

Positions 35–65 (QNRQHSSAISHISNSSPPTRKRSIDGGYTSG) are disordered. Residues 39 to 50 (HSSAISHISNSS) are compositionally biased toward low complexity. Residues 136–242 (FMQKYILIDC…FYAFTRGLEK (107 aa)) enclose the Rhodanese domain.

This sequence belongs to the MPI phosphatase family.

The enzyme catalyses O-phospho-L-tyrosyl-[protein] + H2O = L-tyrosyl-[protein] + phosphate. This is M-phase inducer phosphatase cdc-25.3 (cdc-25.3) from Caenorhabditis elegans.